Reading from the N-terminus, the 72-residue chain is U-poneritoxin(01)-Om7a (72 aa).

The first 27 residues, 1–27 (MKPSGLTFAFLVVFMMAIMYNSVQVTA), serve as a signal peptide directing secretion. Positions 28–45 (DADADAEAEALANALAEA) are excised as a propeptide.

It belongs to the formicidae venom precursor-01 superfamily. As to expression, expressed by the venom gland.

The protein resides in the secreted. Its function is as follows. Peptide with unknown function that does not resemble any other pilosulin-like peptide and appears to have a coiled coil structure. The polypeptide is U-poneritoxin(01)-Om7a (Odontomachus monticola (Trap-jaw ant)).